Here is a 192-residue protein sequence, read N- to C-terminus: 3-hydroxyanthranilate 3,4-dioxygenase (192 aa).

Residue Arg50 participates in O2 binding. Residues His54, Glu60, and His102 each contribute to the Fe cation site. Glu60 lines the substrate pocket. Residues Arg106 and Glu116 each coordinate substrate. 4 residues coordinate a divalent metal cation: Cys131, Cys134, Cys168, and Cys171.

This sequence belongs to the 3-HAO family. The cofactor is Fe(2+).

The protein localises to the cytoplasm. The catalysed reaction is 3-hydroxyanthranilate + O2 = (2Z,4Z)-2-amino-3-carboxymuconate 6-semialdehyde. It participates in cofactor biosynthesis; NAD(+) biosynthesis; quinolinate from L-kynurenine: step 3/3. Its function is as follows. Catalyzes the oxidative ring opening of 3-hydroxyanthranilate to 2-amino-3-carboxymuconate semialdehyde, which spontaneously cyclizes to quinolinate. The polypeptide is 3-hydroxyanthranilate 3,4-dioxygenase (bna1) (Neosartorya fischeri (strain ATCC 1020 / DSM 3700 / CBS 544.65 / FGSC A1164 / JCM 1740 / NRRL 181 / WB 181) (Aspergillus fischerianus)).